We begin with the raw amino-acid sequence, 387 residues long: Protoheme IX farnesyltransferase, mitochondrial (387 aa).

The next 8 membrane-spanning stretches (helical) occupy residues 95-115, 117-137, 183-203, 212-232, 242-262, 284-306, 311-330, and 345-365; these read LTVL…YPGL, FNTL…ANAF, FLVN…YMGI, IVNT…GWAA, PGGL…FNAF, ALNA…AYIS, GPWY…ARAW, and FFAS…CHMI.

This sequence belongs to the UbiA prenyltransferase family.

Its subcellular location is the mitochondrion membrane. It carries out the reaction heme b + (2E,6E)-farnesyl diphosphate + H2O = Fe(II)-heme o + diphosphate. In terms of biological role, converts protoheme IX and farnesyl diphosphate to heme O. In Schizosaccharomyces pombe (strain 972 / ATCC 24843) (Fission yeast), this protein is Protoheme IX farnesyltransferase, mitochondrial (cox10).